A 122-amino-acid polypeptide reads, in one-letter code: uncharacterized protein (122 aa).

A signal peptide spans 1-20; the sequence is MGFHFCIWIIFLLPPPCKKC.

The protein localises to the secreted. This is an uncharacterized protein from Homo sapiens (Human).